The following is a 1563-amino-acid chain: NACHT domain- and WD repeat-containing protein 1 (1563 aa).

Residues 274-314 (TNHQVLEQLRELELARQELGWLYQEIRHHLWQSTESTKVFC) form a WD 1 repeat. Positions 336–666 (TPLVLFGPPG…HRQLSQVIQV (331 aa)) constitute an NACHT domain. 342 to 349 (GPPGIGKT) contributes to the ATP binding site. 12 WD repeats span residues 866–905 (GCHK…VVHV), 908–947 (GHTA…EKVT), 954–994 (QNPT…LVFC), 998–1037 (DVSD…LQEK), 1044–1082 (KEET…LLEK), 1126–1165 (EHED…TLLN), 1168–1207 (EGVG…KLQS), 1212–1251 (LDRT…EQDC), 1253–1292 (DTSN…DVLC), 1346–1385 (QLPE…FPLE), 1386–1425 (AHGS…GMFE), and 1431–1470 (SCCR…LLAV). A disordered region spans residues 1534-1563 (AAEASQDAEPVAVEGKESKSNKRSQVCLIL).

As to quaternary structure, may interact with HSP90AA1, HSP90AB1 and BAG2.

The protein localises to the cytoplasm. Its subcellular location is the cytosol. May play a role in the control of androgen receptor (AR) protein steady-state levels. The chain is NACHT domain- and WD repeat-containing protein 1 (Nwd1) from Mus musculus (Mouse).